Here is a 222-residue protein sequence, read N- to C-terminus: UPF0316 protein Mboo_0791 (222 aa).

The next 3 helical transmembrane spans lie at 25-45 (FFLF…IFLA), 67-87 (LAPV…VGVL), and 93-113 (IAYF…GLVI).

It belongs to the UPF0316 family.

Its subcellular location is the cell membrane. This Methanoregula boonei (strain DSM 21154 / JCM 14090 / 6A8) protein is UPF0316 protein Mboo_0791.